We begin with the raw amino-acid sequence, 228 residues long: Ribonuclease S-4 (228 aa).

The signal sequence occupies residues 1-27 (MGITGMTYMFTMVLSLIVLIFSASTVG). Q36 lines the RNA pocket. The cysteines at positions 42 and 49 are disulfide-linked. RNA is bound at residue H60. H60 serves as the catalytic Proton donor. A disulfide bond links C75 and C119. The N-linked (GlcNAc) asparagine glycan is linked to N87. Position 98-99 (98-99 (NV)) interacts with RNA. An N-linked (GlcNAc...) asparagine glycan is attached at N101. RNA-binding positions include F108, 111-112 (RE), and 115-116 (KH). Residue E112 is part of the active site. The active-site Proton acceptor is H116. N-linked (GlcNAc...) asparagine glycosylation is found at N144, N160, and N175. 2 disulfide bridges follow: C183–C222 and C199–C210.

Belongs to the RNase T2 family. In terms of processing, the N-glycans attached at Asn-101, Asn-160 and Asn-175 consist predominantly of disaccharide (GlcNAc-GlcNAc). The N-glycan at 87 is 53% monosaccharide and 47% disaccharide. The N-glycan at Asn-144 contains mannose and xylose.

It is found in the secreted. The protein resides in the extracellular space. The enzyme catalyses a ribonucleotidyl-ribonucleotide-RNA + H2O = a 3'-end 3'-phospho-ribonucleotide-RNA + a 5'-end dephospho-ribonucleoside-RNA + H(+). Functionally, self-incompatibility (SI) is the inherited ability of a flowering plant to prevent self-fertilization by discriminating between self and non-self pollen during pollination. In many species, self-incompatibility is controlled by the single, multiallelic locus S. The sequence is that of Ribonuclease S-4 from Pyrus pyrifolia (Chinese pear).